A 292-amino-acid polypeptide reads, in one-letter code: NAD kinase (292 aa).

Asp-72 serves as the catalytic Proton acceptor. Residues 72–73, 146–147, His-157, Arg-174, Asp-176, and 187–192 contribute to the NAD(+) site; these read DG, NE, and TAYSLS.

This sequence belongs to the NAD kinase family. It depends on a divalent metal cation as a cofactor.

The protein resides in the cytoplasm. It catalyses the reaction NAD(+) + ATP = ADP + NADP(+) + H(+). Functionally, involved in the regulation of the intracellular balance of NAD and NADP, and is a key enzyme in the biosynthesis of NADP. Catalyzes specifically the phosphorylation on 2'-hydroxyl of the adenosine moiety of NAD to yield NADP. This Shewanella woodyi (strain ATCC 51908 / MS32) protein is NAD kinase.